A 292-amino-acid polypeptide reads, in one-letter code: 4-hydroxy-tetrahydrodipicolinate synthase (292 aa).

Threonine 45 is a binding site for pyruvate. Residue tyrosine 133 is the Proton donor/acceptor of the active site. The Schiff-base intermediate with substrate role is filled by lysine 161. Isoleucine 203 contributes to the pyruvate binding site.

This sequence belongs to the DapA family. In terms of assembly, homotetramer; dimer of dimers.

The protein resides in the cytoplasm. The enzyme catalyses L-aspartate 4-semialdehyde + pyruvate = (2S,4S)-4-hydroxy-2,3,4,5-tetrahydrodipicolinate + H2O + H(+). It functions in the pathway amino-acid biosynthesis; L-lysine biosynthesis via DAP pathway; (S)-tetrahydrodipicolinate from L-aspartate: step 3/4. Functionally, catalyzes the condensation of (S)-aspartate-beta-semialdehyde [(S)-ASA] and pyruvate to 4-hydroxy-tetrahydrodipicolinate (HTPA). This is 4-hydroxy-tetrahydrodipicolinate synthase from Nitrosomonas europaea (strain ATCC 19718 / CIP 103999 / KCTC 2705 / NBRC 14298).